Consider the following 804-residue polypeptide: Probable replication endonuclease from prophage-like region (804 aa).

Residues Tyr-498 and Tyr-502 each act as O-(5'-phospho-DNA)-tyrosine intermediate in the active site.

Belongs to the phage GPA family.

Possible endonuclease which induces a single-strand cut and initiates DNA replication. The polypeptide is Probable replication endonuclease from prophage-like region (Escherichia coli O6:H1 (strain CFT073 / ATCC 700928 / UPEC)).